The sequence spans 557 residues: Inositol-3-phosphate synthase 1 (557 aa).

NAD(+)-binding residues include Gly-67, Gly-68, Asn-69, Asn-70, Asp-141, Ser-177, Val-178, Gln-188, Arg-191, Thr-228, Ala-229, Asn-230, Thr-231, Gly-278, Ser-279, Asp-303, Ser-306, Asn-337, Asn-338, Asp-339, and Lys-352. Ser-279 bears the Phosphoserine mark. Ser-357 is subject to Phosphoserine. Gly-390, Asp-391, Asp-419, and Ser-420 together coordinate NAD(+). The interval 512–557 (GPGIKPGEVVATSPLPCKKEPTPATNGCTGDANGHPQAPTPKLSTA) is disordered. Ser-524 carries the post-translational modification Phosphoserine.

It belongs to the myo-inositol 1-phosphate synthase family. NAD(+) is required as a cofactor. As to expression, in testis, it is expressed in Sertoli cells. Highly expressed in 2 types of germ cells, pachytene spermatocytes and round spermatids.

The protein localises to the cytoplasm. It carries out the reaction D-glucose 6-phosphate = 1D-myo-inositol 3-phosphate. It participates in polyol metabolism; myo-inositol biosynthesis; myo-inositol from D-glucose 6-phosphate: step 1/2. Its function is as follows. Key enzyme in myo-inositol biosynthesis pathway that catalyzes the conversion of glucose 6-phosphate to 1-myo-inositol 1-phosphate in a NAD-dependent manner. Rate-limiting enzyme in the synthesis of all inositol-containing compounds. The sequence is that of Inositol-3-phosphate synthase 1 (Isyna1) from Mus musculus (Mouse).